Reading from the N-terminus, the 1007-residue chain is Glucose transport transcription regulator RGT1 (1007 aa).

The segment covering 1 to 11 has biased composition (polar residues); that stretch reads MLSALIQNGMS. The segment at 1-115 is disordered; the sequence is MLSALIQNGM…ESRRRSKVSR (115 aa). The span at 21 to 33 shows a compositional bias: low complexity; the sequence is NNTTNGSSSTTDN. Polar residues-rich tracts occupy residues 42–65, 74–83, and 96–105; these read NTEN…SKQD, TPRSINTGAS, and VSSNVSTATT. The segment at residues 117-151 is a DNA-binding region (zn(2)-C6 fungal-type); sequence CDQCRKKKIKCDFIEGHDINPDQSCTGCRKIGEKC. Disordered regions lie at residues 155–224, 267–350, 399–423, and 462–496; these read RIPL…ATST, QRRP…SAIP, LQQQ…SNGG, and AEVE…QNLP. Polar residues-rich tracts occupy residues 196 to 206 and 274 to 288; these read SVSNPVNAVNE and SLAS…GKTN. A compositionally biased stretch (low complexity) spans 289-303; it reads QQQPLPSQSQPQSLQ. Polar residues-rich tracts occupy residues 304–323, 329–339, and 404–419; these read NIGN…TFRN, QPSQDSVSEAG, and SLHS…STGI. The span at 473-489 shows a compositional bias: basic residues; it reads QKKRKRSNRSSTSKKGK.

It belongs to the EDS1/RGT1 family.

The protein localises to the nucleus. The protein resides in the cytoplasm. Functionally, glucose-responsive transcription factor that regulates expression of several glucose transporter (HXT) genes in response to glucose. In the absence of glucose, it functions as a transcriptional repressor, whereas high concentrations of glucose cause it to function as a transcriptional activator. In cells growing on low levels of glucose, has a neutral role, neither repressing nor activating transcription. The chain is Glucose transport transcription regulator RGT1 (RGT1) from Kluyveromyces lactis (strain ATCC 8585 / CBS 2359 / DSM 70799 / NBRC 1267 / NRRL Y-1140 / WM37) (Yeast).